A 236-amino-acid chain; its full sequence is Syntaxin-8 (236 aa).

Topologically, residues 1-215 (MAPDPWFSTY…LVDRKSTSCG (215 aa)) are cytoplasmic. A coiled-coil region spans residues 42–65 (VTIRALLQKLKEKIALLKDLLLRA). Positions 145–207 (QKIIQEQDAG…RTETRRVNLV (63 aa)) constitute a t-SNARE coiled-coil homology domain. Phosphoserine is present on Ser160. The helical; Anchor for type IV membrane protein transmembrane segment at 216-232 (MIMVILLLLVAIVVVAV) threads the bilayer. The Vesicular portion of the chain corresponds to 233–236 (WPTK).

It belongs to the syntaxin family. Forms a SNARE complex with STX7, VTI1B and VAMP8 which functions in the homotypic fusion of late endosomes. Part of the SNARE core complex containing STX7, VAMP8 and VTI1B. Interacts with VAMP8. Interacts with HECTD3. Interacts with TPC1. Post-translationally, ubiquitinated by HECTD3.

The protein localises to the membrane. Functionally, vesicle trafficking protein that functions in the early secretory pathway, possibly by mediating retrograde transport from cis-Golgi membranes to the ER. This is Syntaxin-8 (STX8) from Bos taurus (Bovine).